We begin with the raw amino-acid sequence, 204 residues long: Demethylsterigmatocystin 6-O-methyltransferase stcP (204 aa).

S-adenosyl-L-methionine is bound by residues glycine 48 to glycine 49, aspartate 73, aspartate 93 to phenylalanine 94, and arginine 109. Catalysis depends on histidine 113, which acts as the Proton acceptor.

The protein belongs to the class I-like SAM-binding methyltransferase superfamily. Cation-independent O-methyltransferase family.

The enzyme catalyses 6-demethylsterigmatocystin + S-adenosyl-L-methionine = sterigmatocystin + S-adenosyl-L-homocysteine + H(+). The protein operates within mycotoxin biosynthesis; sterigmatocystin biosynthesis. Functionally, norsolorinic acid reductase; part of the gene cluster that mediates the biosynthesis of sterigmatocystin (ST), a polyketide-derived furanocoumarin which is part of the most toxic and carcinogenic compounds among the known mycotoxins. The first step in the biosynthesis of sterigmatocystin is the production of hexanoate by the fatty acid synthase (FAS) units stcJ and stcK. The polyketide backbone is assembled by the non-reducing polyketide synthase stcA by condensation of the starter hexanoyl-CoA and 7 malonyl-CoA extender units followed by cyclization and release of norsolorinic acid. Norsolorinic acid is the first stable intermediate in the biosynthesis of sterigmatocystin and is converted into averantin (AVN) by the ketoreductase stcE which reduces the hexanoate ketone to an alcohol. Averantin is then oxidized into 5'-hydroxyaverantin (HAVN) by the cytochrome P450 monooxygenase stcF. 5'-hydroxyaverantin is further converted to 5'-oxyaverantin (OAVN) by the 5'-hydroxyaverantin dehydrogenase stcG. The next step is the conversion of OAVN into averufin (AVF) which is catalyzed by a yet to be identified enzyme. The cytochrome P450 monooxygenase stcB and the flavin-binding monooxygenase stcW are both required for the conversion of averufin to 1-hydroxyversicolorone. The esterase stcI probably catalyzes the formation of versiconal hemiacetal acetate from 1-hydroxyversicolorone. The oxydoreductase stcN then probably catalyzes the biosynthetic step from versiconal to versicolorin B (VERB). The next step is performed by the versicolorin B desaturase stcL to produce versicolorin A (VERA). The ketoreductase stcU and the cytochrome P450 monooxygenase stcS are involved in the conversion of versicolorin A to demethylsterigmatocystin. The Baeyer-Villiger oxidas stcQ and the reductase stcR might be involved in the biosynthetic step from versicolorin A to demethylsterigmatocystin. The final step in the biosynthesis of sterigmatocystin is the methylation of demethylsterigmatocystin catalyzed by the methyltransferase stcP. In Emericella nidulans (strain FGSC A4 / ATCC 38163 / CBS 112.46 / NRRL 194 / M139) (Aspergillus nidulans), this protein is Demethylsterigmatocystin 6-O-methyltransferase stcP.